A 132-amino-acid polypeptide reads, in one-letter code: Large-conductance mechanosensitive channel (132 aa).

2 helical membrane-spanning segments follow: residues 11–31 (FISR…GAFG) and 75–95 (GSFL…FLLV).

Belongs to the MscL family. In terms of assembly, homopentamer.

Its subcellular location is the cell inner membrane. Functionally, channel that opens in response to stretch forces in the membrane lipid bilayer. May participate in the regulation of osmotic pressure changes within the cell. This is Large-conductance mechanosensitive channel from Synechococcus sp. (strain JA-3-3Ab) (Cyanobacteria bacterium Yellowstone A-Prime).